Consider the following 91-residue polypeptide: Non-specific lipid-transfer protein P5 (91 aa).

Cystine bridges form between C3–C50, C13–C27, C28–C73, and C48–C87.

The protein resides in the secreted. Functionally, plant non-specific lipid-transfer proteins transfer phospholipids as well as galactolipids across membranes. May play a role in wax or cutin deposition in the cell walls of expanding epidermal cells and certain secretory tissues. The chain is Non-specific lipid-transfer protein P5 from Vitis sp. (Grape).